A 97-amino-acid chain; its full sequence is Eotaxin (97 aa).

Positions 1 to 23 are cleaved as a signal peptide; sequence MQSSTALLFLLLTVTSFTSQVLA. 2 disulfides stabilise this stretch: Cys32–Cys57 and Cys33–Cys73. O-linked (GalNAc...) threonine glycosylation is present at Thr94.

This sequence belongs to the intercrine beta (chemokine CC) family. As to expression, expressed constitutively in the thymus. Expression inducible in the lung (type I alveolar epithelial cells), intestine, heart, spleen, kidney.

The protein localises to the secreted. Functionally, in response to the presence of allergens, this protein directly promotes the accumulation of eosinophils (a prominent feature of allergic inflammatory reactions), but not lymphocytes, macrophages or neutrophils. Binds to CCR3. The sequence is that of Eotaxin (Ccl11) from Mus musculus (Mouse).